A 100-amino-acid polypeptide reads, in one-letter code: uncharacterized protein (100 aa).

The first 26 residues, 1–26, serve as a signal peptide directing secretion; that stretch reads MKRLLVSLRVWMVFLMNWVTPDRKTA.

This is an uncharacterized protein from Bacillus subtilis (strain 168).